The chain runs to 135 residues: Methylglyoxal synthase (135 aa).

Residues 1–135 form the MGS-like domain; sequence MPKRRRIALI…AQPDPKEIHA (135 aa). Substrate-binding positions include His-12, Lys-16, 38–41, and 58–59; these read TGTT and SG. Residue Asp-64 is the Proton donor/acceptor of the active site. His-91 serves as a coordination point for substrate.

Belongs to the methylglyoxal synthase family.

The enzyme catalyses dihydroxyacetone phosphate = methylglyoxal + phosphate. Functionally, catalyzes the formation of methylglyoxal from dihydroxyacetone phosphate. In Ralstonia nicotianae (strain ATCC BAA-1114 / GMI1000) (Ralstonia solanacearum), this protein is Methylglyoxal synthase.